A 219-amino-acid polypeptide reads, in one-letter code: Epididymal secretory glutathione peroxidase (219 aa).

Residues 1–21 (MTVQLGAFYLFPLFMAGFVQT) form the signal peptide. Cysteine 71 is a catalytic residue.

This sequence belongs to the glutathione peroxidase family. In terms of assembly, homotetramer. As to expression, proximal caput epididymis.

The protein resides in the secreted. The catalysed reaction is 2 glutathione + H2O2 = glutathione disulfide + 2 H2O. Its function is as follows. May constitute a glutathione peroxidase-like protective system against peroxide damage in sperm membrane lipids. Since the purified porcine enzyme has very little activity towards hydrogen peroxide or organic hydroperoxides the protective effect is not likely to be exerted by its enzymatic activity. Instead, may protect sperm from premature acrosome reaction in the epididymis by binding to lipid peroxides, which might otherwise interact with phospholipase A2 and induce the acrosome reaction. This chain is Epididymal secretory glutathione peroxidase (GPX5), found in Sus scrofa (Pig).